The following is a 296-amino-acid chain: MLTLYGQERSPENSTTSTTDASDRRDETPSSEIVVRDIHAMTTTTELTRPQQRGSGGGYLSPSRSIAFSDGTTSSGENFTTVSREFNALVIAGSSMDNNSNGTNQSGGHRDVIRDERNELTRIGENDDVGDHGQVPEEDSNPWAIVPDDYNNRDGSENNIVLASSGGQNRMVTTASVQRVKREEVEAKITAWQTAKVAKINNRFKRQDAVINGWLNEQVHRANSWMKKIERKLEDRRAKAMEKTQNKVAKAQRKAEERRATAEGKRGTEVARVLEVANLMRAVGRPPAKRSFFSLS.

3 disordered regions span residues 1 to 78, 121 to 142, and 242 to 266; these read MLTL…SGEN, TRIG…DSNP, and EKTQ…EGKR. A compositionally biased stretch (basic and acidic residues) spans 21–39; that stretch reads ASDRRDETPSSEIVVRDIH. Polar residues-rich tracts occupy residues 41–53 and 62–78; these read MTTT…PQQR and PSRS…SGEN. 2 stretches are compositionally biased toward basic and acidic residues: residues 121-135 and 253-266; these read TRIG…HGQV and RKAE…EGKR. A coiled-coil region spans residues 226 to 261; the sequence is MKKIERKLEDRRAKAMEKTQNKVAKAQRKAEERRAT.

This sequence belongs to the remorin family. As to quaternary structure, forms homodimer and heterodimer with REM4.2. Interacts with KIN11. Phosphorylated by KIN11. Post-translationally, probably ubiquitinated and degraded by the 26S proteasome pathway. Predominantly detected in bud, stem, root, flower, silique, and leaves, and enhanced dramatically in senescence leaf.

It is found in the cell membrane. Collaborates with REM4.2 to positively regulate the BCTV and BSCTV susceptibility. The protein is Remorin 4.1 of Arabidopsis thaliana (Mouse-ear cress).